Reading from the N-terminus, the 73-residue chain is Translation initiation factor IF-1 (73 aa).

Positions 1 to 72 constitute an S1-like domain; sequence MAKEEAIEKD…SKGRIVYRYK (72 aa).

It belongs to the IF-1 family. As to quaternary structure, component of the 30S ribosomal translation pre-initiation complex which assembles on the 30S ribosome in the order IF-2 and IF-3, IF-1 and N-formylmethionyl-tRNA(fMet); mRNA recruitment can occur at any time during PIC assembly.

Its subcellular location is the cytoplasm. Functionally, one of the essential components for the initiation of protein synthesis. Stabilizes the binding of IF-2 and IF-3 on the 30S subunit to which N-formylmethionyl-tRNA(fMet) subsequently binds. Helps modulate mRNA selection, yielding the 30S pre-initiation complex (PIC). Upon addition of the 50S ribosomal subunit IF-1, IF-2 and IF-3 are released leaving the mature 70S translation initiation complex. This Salinibacter ruber (strain DSM 13855 / M31) protein is Translation initiation factor IF-1.